The primary structure comprises 166 residues: 2-C-methyl-D-erythritol 2,4-cyclodiphosphate synthase (166 aa).

Positions 12 and 14 each coordinate a divalent metal cation. 4-CDP-2-C-methyl-D-erythritol 2-phosphate-binding positions include 12–14 and 38–39; these read DSH and HS. A divalent metal cation is bound at residue His-46. 4-CDP-2-C-methyl-D-erythritol 2-phosphate-binding positions include 60–62, 65–69, and Arg-146; these read DIG and FPDTD.

It belongs to the IspF family. In terms of assembly, homotrimer. It depends on a divalent metal cation as a cofactor.

The catalysed reaction is 4-CDP-2-C-methyl-D-erythritol 2-phosphate = 2-C-methyl-D-erythritol 2,4-cyclic diphosphate + CMP. The protein operates within isoprenoid biosynthesis; isopentenyl diphosphate biosynthesis via DXP pathway; isopentenyl diphosphate from 1-deoxy-D-xylulose 5-phosphate: step 4/6. Functionally, involved in the biosynthesis of isopentenyl diphosphate (IPP) and dimethylallyl diphosphate (DMAPP), two major building blocks of isoprenoid compounds. Catalyzes the conversion of 4-diphosphocytidyl-2-C-methyl-D-erythritol 2-phosphate (CDP-ME2P) to 2-C-methyl-D-erythritol 2,4-cyclodiphosphate (ME-CPP) with a corresponding release of cytidine 5-monophosphate (CMP). This chain is 2-C-methyl-D-erythritol 2,4-cyclodiphosphate synthase, found in Gemmatimonas aurantiaca (strain DSM 14586 / JCM 11422 / NBRC 100505 / T-27).